The sequence spans 173 residues: Dual-action ribosomal maturation protein DarP (173 aa).

Belongs to the DarP family.

It localises to the cytoplasm. Functionally, member of a network of 50S ribosomal subunit biogenesis factors which assembles along the 30S-50S interface, preventing incorrect 23S rRNA structures from forming. Promotes peptidyl transferase center (PTC) maturation. The polypeptide is Dual-action ribosomal maturation protein DarP (Pseudomonas syringae pv. tomato (strain ATCC BAA-871 / DC3000)).